The following is a 341-amino-acid chain: Holliday junction branch migration complex subunit RuvB (341 aa).

Residues 1 to 182 (MKDRLISAVA…FGVISRLEYY (182 aa)) form a large ATPase domain (RuvB-L) region. Residues Leu-21, Arg-22, Gly-63, Lys-66, Thr-67, Thr-68, 129–131 (EDY), Arg-172, Tyr-182, and Arg-219 each bind ATP. Thr-67 contributes to the Mg(2+) binding site. A small ATPAse domain (RuvB-S) region spans residues 183 to 253 (RPEDLVLIVN…VAVEALKFLE (71 aa)). The tract at residues 256–341 (PLGLDFADRR…REETDQVSLW (86 aa)) is head domain (RuvB-H). Arg-311 and Arg-316 together coordinate DNA.

It belongs to the RuvB family. In terms of assembly, homohexamer. Forms an RuvA(8)-RuvB(12)-Holliday junction (HJ) complex. HJ DNA is sandwiched between 2 RuvA tetramers; dsDNA enters through RuvA and exits via RuvB. An RuvB hexamer assembles on each DNA strand where it exits the tetramer. Each RuvB hexamer is contacted by two RuvA subunits (via domain III) on 2 adjacent RuvB subunits; this complex drives branch migration. In the full resolvosome a probable DNA-RuvA(4)-RuvB(12)-RuvC(2) complex forms which resolves the HJ.

It localises to the cytoplasm. It carries out the reaction ATP + H2O = ADP + phosphate + H(+). Its function is as follows. The RuvA-RuvB-RuvC complex processes Holliday junction (HJ) DNA during genetic recombination and DNA repair, while the RuvA-RuvB complex plays an important role in the rescue of blocked DNA replication forks via replication fork reversal (RFR). RuvA specifically binds to HJ cruciform DNA, conferring on it an open structure. The RuvB hexamer acts as an ATP-dependent pump, pulling dsDNA into and through the RuvAB complex. RuvB forms 2 homohexamers on either side of HJ DNA bound by 1 or 2 RuvA tetramers; 4 subunits per hexamer contact DNA at a time. Coordinated motions by a converter formed by DNA-disengaged RuvB subunits stimulates ATP hydrolysis and nucleotide exchange. Immobilization of the converter enables RuvB to convert the ATP-contained energy into a lever motion, pulling 2 nucleotides of DNA out of the RuvA tetramer per ATP hydrolyzed, thus driving DNA branch migration. The RuvB motors rotate together with the DNA substrate, which together with the progressing nucleotide cycle form the mechanistic basis for DNA recombination by continuous HJ branch migration. Branch migration allows RuvC to scan DNA until it finds its consensus sequence, where it cleaves and resolves cruciform DNA. This chain is Holliday junction branch migration complex subunit RuvB, found in Pelotomaculum thermopropionicum (strain DSM 13744 / JCM 10971 / SI).